A 489-amino-acid chain; its full sequence is MPFSPPCLDPAAAAAASLSFLPAAAARPPAPCAVAPRSRRALRVAASVATAPESAAAQGRLESLSQVAGVLGTQWGDEGKGKLVDILAQRFDIVARCQGGANAGHTIYNSEGKKFSLHLVPSGILNEKTMCVVGNGAVVHLPGFFKEIDGLESNGISCEGRILVSDRAHLLFDFHQTVDGLREVELGNSLIGTTKRGIGPCYSNKVIRNGLRVSDLRHMDTFGAKLNTLLRDAALRFEGFEYSTKTLKEEVEKYEKFAERLGPYITDTVHFMNQSILQNKKILVEGGQATMLDIDFGTYPFVTSSSPSAGGICTGLGIAPRSIGDLIGVVKAYTTRVGSGPFPTELLGKTGDLLRASGMEFGTTTGRPRRCGWLDIVALKYCCQINGFSSLNLTKLDVLTGLKEVKLGIAYCTEDGKEIESFPADLDLLEKIKVKYEVLPGWEDDISSVRNYSDLPETARLYVERIEELVGIPVHYIGVGPGRDALIYK.

A chloroplast-targeting transit peptide spans 1-45; it reads MPFSPPCLDPAAAAAASLSFLPAAAARPPAPCAVAPRSRRALRVA. Residues 76 to 82 and 104 to 106 contribute to the GTP site; these read GDEGKGK and GHT. The active-site Proton acceptor is D77. D77 and G104 together coordinate Mg(2+). IMP-binding positions include 77-80, 102-105, T194, R208, Q288, T303, and R367; these read DEGK and NAGH. H105 serves as the catalytic Proton donor. Residue 363–369 coordinates substrate; the sequence is TTTGRPR. GTP-binding positions include R369, 395–397, and 478–480; these read KLD and GVG.

It belongs to the adenylosuccinate synthetase family. In terms of assembly, homodimer. Requires Mg(2+) as cofactor.

Its subcellular location is the plastid. It localises to the chloroplast. It catalyses the reaction IMP + L-aspartate + GTP = N(6)-(1,2-dicarboxyethyl)-AMP + GDP + phosphate + 2 H(+). The protein operates within purine metabolism; AMP biosynthesis via de novo pathway; AMP from IMP: step 1/2. In terms of biological role, plays an important role in the de novo pathway and in the salvage pathway of purine nucleotide biosynthesis. Catalyzes the first committed step in the biosynthesis of AMP from IMP. The chain is Adenylosuccinate synthetase 2, chloroplastic from Oryza sativa subsp. japonica (Rice).